A 145-amino-acid polypeptide reads, in one-letter code: uncharacterized protein (145 aa).

Positions 78-145 (KLQIVAKDRI…DVVEKISILW (68 aa)) constitute an ACT domain.

This is an uncharacterized protein from Methanocaldococcus jannaschii (strain ATCC 43067 / DSM 2661 / JAL-1 / JCM 10045 / NBRC 100440) (Methanococcus jannaschii).